The chain runs to 329 residues: G-protein coupled bile acid receptor 1 (329 aa).

At M1–G15 the chain is on the extracellular side. Residue N5 is glycosylated (N-linked (GlcNAc...) asparagine). The helical transmembrane segment at V16 to L36 threads the bilayer. At G37 to A49 the chain is on the cytoplasmic side. A helical membrane pass occupies residues G50 to L70. Topologically, residues P71–C84 are extracellular. Residues C84 and C154 are joined by a disulfide bond. A helical transmembrane segment spans residues L85–V105. Residues H106–R124 are Cytoplasmic-facing. A helical membrane pass occupies residues L125–W145. Residues N146–Y164 are Extracellular-facing. A glycan (N-linked (GlcNAc...) asparagine) is linked at N153. The chain crosses the membrane as a helical span at residues L165–V185. Over R186–T229 the chain is Cytoplasmic. Residues L230–Y250 traverse the membrane as a helical segment. Topologically, residues E251–T260 are extracellular. A helical membrane pass occupies residues L261–L281. Over G282 to N329 the chain is Cytoplasmic.

It belongs to the G-protein coupled receptor 1 family.

The protein resides in the cell membrane. Functionally, receptor for bile acid. Bile acid-binding induces its internalization, activation of extracellular signal-regulated kinase and intracellular cAMP production. May be involved in the suppression of macrophage functions by bile acids. Involved in bile acid promoted GLP1R secretion. The chain is G-protein coupled bile acid receptor 1 (Gpbar1) from Mus musculus (Mouse).